Here is a 398-residue protein sequence, read N- to C-terminus: Nematocin receptor 2 (398 aa).

At 1-25 (MNNNTLNITNQRTAAAMSQIYFLVV) the chain is on the extracellular side. N-linked (GlcNAc...) asparagine glycosylation is found at Asn3 and Asn7. A helical transmembrane segment spans residues 26–46 (YQTAVMIVSLLGNLFLLFVIF). At 47-58 (RANQVMKRRVSP) the chain is on the cytoplasmic side. A helical transmembrane segment spans residues 59-79 (VQLLIIHTCVADLLFALLSLG). The Extracellular segment spans residues 80-99 (TEILTLRTYPQYYGSNFVCK). Cysteines 98 and 173 form a disulfide. Residues 100 to 120 (LMRYVQMFPMYASPFLLVAIS) form a helical membrane-spanning segment. Topologically, residues 121-143 (ADRYQAICRPLAHFRSSRYRRPN) are cytoplasmic. Residues 144 to 164 (WMAAIAWGLALVLSIPQFFVW) form a helical membrane-spanning segment. At 165 to 187 (TKHSKTGRCSTIYGQNKNTVKIT) the chain is on the extracellular side. Residues 188–208 (YVIMFNTLAWLLPSILAAVFY) traverse the membrane as a helical segment. Topologically, residues 209-271 (YCVCKAVRLS…DRKRVQTVRL (63 aa)) are cytoplasmic. A helical membrane pass occupies residues 272–292 (TITIVACNFFLWMPFCLINVI). Residues 293–302 (QALWPEISHI) are Extracellular-facing. A helical membrane pass occupies residues 303–325 (MFINYVAILGNLNSCLNPWIYIL). Over 326-398 (FNRSHVRKAL…DSTSLKTNSN (73 aa)) the chain is Cytoplasmic.

Belongs to the G-protein coupled receptor 1 family. Vasopressin/oxytocin receptor subfamily. Detected in the ADL sensory neurons, the RMED and RMEV motor neurons, and the PQR tail neuron. In males, detected in SPC tail neurons involved in spicule penetration and sperm transfer, and male-specific oblique muscles involved in vulval contact.

The protein resides in the cell membrane. Not directly activated by nematocin. May modulate activity of the nematocin receptor ntr-1, leading to reduced intracellular cAMP production. Plays a role in male mating behavior. In Caenorhabditis elegans, this protein is Nematocin receptor 2.